Reading from the N-terminus, the 258-residue chain is uncharacterized protein (258 aa).

The next 7 membrane-spanning stretches (helical) occupy residues 8–28, 38–58, 70–90, 121–141, 176–196, 204–224, and 231–251; these read VFLA…IVWF, VFFI…GGVH, EAMQ…GIFE, LEAI…AFAI, LGGI…LLVL, PLFL…AVLY, and HAAA…YWIV.

The protein resides in the cell membrane. This is an uncharacterized protein from Bacillus subtilis (strain 168).